A 184-amino-acid polypeptide reads, in one-letter code: Peptide deformylase (184 aa).

C111 and H154 together coordinate Fe cation. E155 is a catalytic residue. H158 is a binding site for Fe cation.

It belongs to the polypeptide deformylase family. Requires Fe(2+) as cofactor.

The catalysed reaction is N-terminal N-formyl-L-methionyl-[peptide] + H2O = N-terminal L-methionyl-[peptide] + formate. In terms of biological role, removes the formyl group from the N-terminal Met of newly synthesized proteins. Requires at least a dipeptide for an efficient rate of reaction. N-terminal L-methionine is a prerequisite for activity but the enzyme has broad specificity at other positions. This is Peptide deformylase from Pediococcus pentosaceus (strain ATCC 25745 / CCUG 21536 / LMG 10740 / 183-1w).